Reading from the N-terminus, the 261-residue chain is Recombination protein bet (261 aa).

In terms of biological role, gene bet protein functions in general recombination and in the late, rolling-circle mode of lambda DNA replication. Has a function similar to that of E.coli recT. It is a single-stranded DNA binding protein that can promote renaturation of DNA. This Escherichia coli (Bacteriophage lambda) protein is Recombination protein bet (bet).